Here is a 119-residue protein sequence, read N- to C-terminus: Autophagy-related protein 8B (119 aa).

A lipid anchor (Phosphatidylethanolamine amidated glycine) is attached at Gly-117. Positions Leu-118–Leu-119 are cleaved as a propeptide — removed in mature form.

It belongs to the ATG8 family. As to quaternary structure, interacts with ATG4. The C-terminal 2 residues are removed by ATG4 to expose Gly-117 at the C-terminus. The C-terminal Gly is then amidated with phosphatidylethanolamine by an activating system similar to that for ubiquitin.

It localises to the cytoplasmic vesicle. Its subcellular location is the autophagosome membrane. The protein localises to the vacuole membrane. It is found in the cytoplasm. The protein resides in the cytoskeleton. Functionally, ubiquitin-like modifier involved in autophagosomes formation. May mediate the delivery of the autophagosomes to the vacuole via the microtubule cytoskeleton. This chain is Autophagy-related protein 8B (ATG8B), found in Oryza sativa subsp. indica (Rice).